The following is a 74-amino-acid chain: Large ribosomal subunit protein eL38B (74 aa).

This sequence belongs to the eukaryotic ribosomal protein eL38 family. As to quaternary structure, component of the large ribosomal subunit (LSU). Mature yeast ribosomes consist of a small (40S) and a large (60S) subunit. The 40S small subunit contains 1 molecule of ribosomal RNA (18S rRNA) and at least 33 different proteins. The large 60S subunit contains 3 rRNA molecules (25S, 5.8S and 5S rRNA) and at least 46 different proteins.

The protein localises to the cytoplasm. In terms of biological role, component of the ribosome, a large ribonucleoprotein complex responsible for the synthesis of proteins in the cell. The small ribosomal subunit (SSU) binds messenger RNAs (mRNAs) and translates the encoded message by selecting cognate aminoacyl-transfer RNA (tRNA) molecules. The large subunit (LSU) contains the ribosomal catalytic site termed the peptidyl transferase center (PTC), which catalyzes the formation of peptide bonds, thereby polymerizing the amino acids delivered by tRNAs into a polypeptide chain. The nascent polypeptides leave the ribosome through a tunnel in the LSU and interact with protein factors that function in enzymatic processing, targeting, and the membrane insertion of nascent chains at the exit of the ribosomal tunnel. This is Large ribosomal subunit protein eL38B (rpl3802) from Schizosaccharomyces pombe (strain 972 / ATCC 24843) (Fission yeast).